The primary structure comprises 225 residues: UPF0758 protein Sfri_3828 (225 aa).

Residues 102–224 (ILTNPDLTRD…IVSFAERGWI (123 aa)) form the MPN domain. Positions 173, 175, and 186 each coordinate Zn(2+). The JAMM motif signature appears at 173-186 (HNHPSGIAEPSQAD).

The protein belongs to the UPF0758 family.

This Shewanella frigidimarina (strain NCIMB 400) protein is UPF0758 protein Sfri_3828.